Here is a 291-residue protein sequence, read N- to C-terminus: Prolyl 4-hydroxylase 5 (291 aa).

Residues 1–22 (MASKSKQHLRYQPRKSVSRSTQ) are Cytoplasmic-facing. The helical; Signal-anchor for type II membrane protein transmembrane segment at 23–43 (AFTVLILLLVVILILLGLGIL) threads the bilayer. Over 44 to 291 (SLPNANRNSS…KWFHVHEFKV (248 aa)) the chain is Extracellular. Asn-51 carries an N-linked (GlcNAc...) asparagine glycan. A Fe2OG dioxygenase domain is found at 163 to 286 (NGEGLQVLHY…KWSSTKWFHV (124 aa)). The Fe cation site is built by His-181 and Asp-183. An N-linked (GlcNAc...) asparagine glycan is attached at Asn-222. His-267 is a Fe cation binding site. Residue Lys-277 participates in 2-oxoglutarate binding.

It belongs to the P4HA family. The cofactor is Fe(2+). L-ascorbate serves as cofactor. Expressed in epidermal root hair cells (trichoblasts).

It is found in the endoplasmic reticulum membrane. The protein localises to the golgi apparatus membrane. The catalysed reaction is L-prolyl-[collagen] + 2-oxoglutarate + O2 = trans-4-hydroxy-L-prolyl-[collagen] + succinate + CO2. Functionally, catalyzes the post-translational formation of 4-hydroxyproline in -Xaa-Pro-Gly- sequences in proline-rich peptide sequences of plant glycoproteins and other proteins. Hydroxyprolines are important constituent of many plant cell wall glycoproteins such as extensins, hydroxyproline-rich glycoproteins, lectins and arabinogalactan proteins. Possesses high affinity for leucine-rich repeat and proline-rich extensins of root cell walls that are essential for root hair development. Hydroxyprolines define the subsequent O-glycosylation sites by arabinosyltransferases which elongate the O-arabinosides on extensins. This Arabidopsis thaliana (Mouse-ear cress) protein is Prolyl 4-hydroxylase 5.